The following is a 201-amino-acid chain: Endoribonuclease YbeY (201 aa).

Residues H156, H160, and H166 each coordinate Zn(2+).

The protein belongs to the endoribonuclease YbeY family. Zn(2+) is required as a cofactor.

Its subcellular location is the cytoplasm. Functionally, single strand-specific metallo-endoribonuclease involved in late-stage 70S ribosome quality control and in maturation of the 3' terminus of the 16S rRNA. This Cupriavidus pinatubonensis (strain JMP 134 / LMG 1197) (Cupriavidus necator (strain JMP 134)) protein is Endoribonuclease YbeY.